Here is a 254-residue protein sequence, read N- to C-terminus: MQALLEHFITQSTVYSLMAVVLVAFLESLALVGLILPGTVLMAGLGALIGSGELSFWHAWLAGIIGCLMGDWISFWLGWRFKKPLHRWSFLKKNKALLDKTEHALHQHSMFTILVGRFVGPTRPLVPMVAGMLDLPVAKFITPNIIGCLLWPPFYFLPGILAGAAIDIPAGMQSGEFKWLLLATAVFLWVGGWLCWRLWRSGKATDRLSHYLSRGRLLWLTPLISAIGVVALVVLIRHPLMPVYIDILRKVVGV.

Residues 1-7 lie on the Periplasmic side of the membrane; it reads MQALLEH. Helical transmembrane passes span 8–28 and 29–49; these read FITQSTVYSLMAVVLVAFLES and LALVGLILPGTVLMAGLGALI. At 50 to 58 the chain is on the periplasmic side; sequence GSGELSFWH. The helical transmembrane segment at 59–79 threads the bilayer; sequence AWLAGIIGCLMGDWISFWLGW. At 80–144 the chain is on the cytoplasmic side; sequence RFKKPLHRWS…LPVAKFITPN (65 aa). Residues 145–165 form a helical membrane-spanning segment; that stretch reads IIGCLLWPPFYFLPGILAGAA. Residues 166 to 178 are Periplasmic-facing; that stretch reads IDIPAGMQSGEFK. The helical transmembrane segment at 179–199 threads the bilayer; sequence WLLLATAVFLWVGGWLCWRLW. Over 200 to 215 the chain is Cytoplasmic; the sequence is RSGKATDRLSHYLSRG. The helical transmembrane segment at 216–236 threads the bilayer; the sequence is RLLWLTPLISAIGVVALVVLI. Residues 237–254 are Periplasmic-facing; it reads RHPLMPVYIDILRKVVGV.

It belongs to the DedA family.

Its subcellular location is the cell inner membrane. The polypeptide is Inner membrane protein YabI (yabI) (Escherichia coli (strain K12)).